A 331-amino-acid polypeptide reads, in one-letter code: 2-isopropylmalate synthase (331 aa).

The region spanning 1 to 80 is the Pyruvate carboxyltransferase domain; that stretch reads RDEVVRGRDV…YTRINTREIY (80 aa). Residues His-15, His-17, and Asn-51 each coordinate Mn(2+). The regulatory domain stretch occupies residues 205–331; the sequence is QLEHVQFFSG…PSIEEVHRGV (127 aa).

This sequence belongs to the alpha-IPM synthase/homocitrate synthase family. LeuA type 1 subfamily. In terms of assembly, homotetramer. Mn(2+) serves as cofactor.

It is found in the cytoplasm. It carries out the reaction 3-methyl-2-oxobutanoate + acetyl-CoA + H2O = (2S)-2-isopropylmalate + CoA + H(+). The protein operates within amino-acid biosynthesis; L-leucine biosynthesis; L-leucine from 3-methyl-2-oxobutanoate: step 1/4. Its function is as follows. Catalyzes the condensation of the acetyl group of acetyl-CoA with 3-methyl-2-oxobutanoate (2-oxoisovalerate) to form 3-carboxy-3-hydroxy-4-methylpentanoate (2-isopropylmalate). The sequence is that of 2-isopropylmalate synthase from Thermus thermophilus.